The chain runs to 219 residues: N-(5'-phosphoribosyl)anthranilate isomerase (219 aa).

The protein belongs to the TrpF family.

It carries out the reaction N-(5-phospho-beta-D-ribosyl)anthranilate = 1-(2-carboxyphenylamino)-1-deoxy-D-ribulose 5-phosphate. It functions in the pathway amino-acid biosynthesis; L-tryptophan biosynthesis; L-tryptophan from chorismate: step 3/5. The chain is N-(5'-phosphoribosyl)anthranilate isomerase from Bradyrhizobium sp. (strain ORS 278).